The primary structure comprises 271 residues: TIP41-like protein (271 aa).

K106 carries the N6-acetyllysine modification. Residues 173–271 (RVMPSSFFLL…PVDSQSTPSE (99 aa)) are interaction with PPP2CA. 2 positions are modified to phosphoserine: S265 and S270.

Belongs to the TIP41 family. Interacts with PPP2CA. Interacts with PPP2CB, PPP4C and PPP6C. Interacts with IGBP1; the interaction is dependent on PPP2CA. Associates with a protein phosphatase 2A PP2A(C):IGBP1 complex. Interacts with PPP4C and PPP4R2.

Its subcellular location is the cytoplasm. Its function is as follows. May be a allosteric regulator of serine/threonine-protein phosphatase 2A (PP2A). Inhibits catalytic activity of the PP2A(D) core complex in vitro. The PP2A(C):TIPRL complex does not show phosphatase activity. Acts as a negative regulator of serine/threonine-protein phosphatase 4 probably by inhibiting the formation of the active PPP4C:PPP4R2 complex; the function is proposed to implicate it in DNA damage response by promoting H2AX phosphorylated on Ser-140 (gamma-H2AX). May play a role in the regulation of ATM/ATR signaling pathway controlling DNA replication and repair. The chain is TIP41-like protein (Tiprl) from Mus musculus (Mouse).